The sequence spans 154 residues: Endoribonuclease YbeY (154 aa).

Positions 114, 118, and 124 each coordinate Zn(2+).

It belongs to the endoribonuclease YbeY family. It depends on Zn(2+) as a cofactor.

The protein resides in the cytoplasm. Its function is as follows. Single strand-specific metallo-endoribonuclease involved in late-stage 70S ribosome quality control and in maturation of the 3' terminus of the 16S rRNA. The chain is Endoribonuclease YbeY from Anaplasma phagocytophilum (strain HZ).